The primary structure comprises 1299 residues: DNA-directed RNA polymerase subunit beta' (1299 aa).

4 residues coordinate Zn(2+): Cys60, Cys62, Cys75, and Cys78. The interval 385-405 (GRRGRPVTGPGNRPLKSLSDM) is disordered. Positions 535, 537, and 539 each coordinate Mg(2+). Zn(2+) contacts are provided by Cys886, Cys962, Cys969, and Cys972.

This sequence belongs to the RNA polymerase beta' chain family. The RNAP catalytic core consists of 2 alpha, 1 beta, 1 beta' and 1 omega subunit. When a sigma factor is associated with the core the holoenzyme is formed, which can initiate transcription. Mg(2+) is required as a cofactor. It depends on Zn(2+) as a cofactor.

It carries out the reaction RNA(n) + a ribonucleoside 5'-triphosphate = RNA(n+1) + diphosphate. Functionally, DNA-dependent RNA polymerase catalyzes the transcription of DNA into RNA using the four ribonucleoside triphosphates as substrates. This is DNA-directed RNA polymerase subunit beta' from Streptomyces avermitilis (strain ATCC 31267 / DSM 46492 / JCM 5070 / NBRC 14893 / NCIMB 12804 / NRRL 8165 / MA-4680).